A 924-amino-acid polypeptide reads, in one-letter code: DNA repair and recombination protein RDH54 (924 aa).

The span at 1-10 shows a compositional bias: basic and acidic residues; that stretch reads MQIPKYENKP. Disordered stretches follow at residues 1-21 and 155-182; these read MQIP…GSNK and EALS…KNDG. A compositionally biased stretch (low complexity) spans 168 to 178; the sequence is TTSTTETVPST. The Helicase ATP-binding domain maps to 299–487; the sequence is LENDSDISGC…FTIIDFINPG (189 aa). Residue 346-353 coordinates ATP; it reads IPLTGLCK. The DEGH box signature appears at 472 to 475; the sequence is NDLN. A Glycyl lysine isopeptide (Lys-Gly) (interchain with G-Cter in ubiquitin) cross-link involves residue Lys615. The Helicase C-terminal domain maps to 631-790; that stretch reads KLRVLMTLLE…DSEMRNKESS (160 aa).

It belongs to the SNF2/RAD54 helicase family. In terms of assembly, interacts with RAD51 and DMC1.

It localises to the nucleus. The catalysed reaction is ATP + H2O = ADP + phosphate + H(+). In terms of biological role, involved in the recombinational repair of double-strand breaks (DSB) in DNA during mitosis and meiosis. Has DNA dependent ATPase activity. Promotes D-loop (displacement loop) formation with RAD51 recombinase. Modifies the topology of double-stranded DNA during the D-loop reaction to facilitate the invasion of the homologous duplex molecule by the initiating single-stranded DNA substrate. Required for adaptation from G2/M checkpoint arrest induced by a double strand break, by participating in monitoring the extent of single-stranded DNA produced by resection of DNA ends. This role is distinct from its roles in recombination. Promotes colocalization of RAD51 and DMC1 during meiotic recombination. Involved in crossover interference. This is DNA repair and recombination protein RDH54 (RDH54) from Saccharomyces cerevisiae (strain AWRI1631) (Baker's yeast).